The chain runs to 156 residues: E3 ubiquitin-protein ligase RNF181 (156 aa).

The RING-type; atypical zinc finger occupies 79–120 (CPVCLLEFEEGETVRQLPCEHLFHSACILPWLGKTNSCPLCR).

It belongs to the RNF181 family.

The catalysed reaction is S-ubiquitinyl-[E2 ubiquitin-conjugating enzyme]-L-cysteine + [acceptor protein]-L-lysine = [E2 ubiquitin-conjugating enzyme]-L-cysteine + N(6)-ubiquitinyl-[acceptor protein]-L-lysine.. It participates in protein modification; protein ubiquitination. E3 ubiquitin-protein ligase which accepts ubiquitin from an E2 ubiquitin-conjugating enzyme in the form of a thioester and then directly transfers the ubiquitin to targeted substrates. Catalyzes monoubiquitination of 26S proteasome subunit PSMC2/RPT1. The sequence is that of E3 ubiquitin-protein ligase RNF181 (rnf181) from Xenopus laevis (African clawed frog).